The chain runs to 272 residues: Putative G-protein coupled receptor GPR32P1 (272 aa).

Residues 1-24 (MNGVSEGTRGCSDRQPGALTQGHS) are disordered. Topologically, residues 1–46 (MNGVSEGTRGCSDRQPGALTQGHSCSRKMNASRCLSEEVGSLRPLT) are extracellular. An N-linked (GlcNAc...) asparagine glycan is attached at asparagine 30. The chain crosses the membrane as a helical span at residues 47–67 (MAVLSASFVVGVLGNGLVPWV). Residues 68-78 (TVFRMARTVST) lie on the Cytoplasmic side of the membrane. A helical transmembrane segment spans residues 79–99 (VCFFHLALADFMLSLSLPILV). Residues 100–116 (YYIVSRQWLLGEWACKL) lie on the Extracellular side of the membrane. The cysteines at positions 114 and 191 are disulfide-linked. Residues 117–137 (YTGFVFLTFSTSNCLLVLISV) form a helical membrane-spanning segment. The Cytoplasmic segment spans residues 138 to 158 (DRCISVLYPVWALNHRTEQRA). A helical transmembrane segment spans residues 159 to 179 (SWLAFGVWLLAAALCSAHLKF). The Extracellular portion of the chain corresponds to 180–213 (RTTRKWNGCMQCYLQFNLENETAQMWTQEVFGRQ). A glycan (N-linked (GlcNAc...) asparagine) is linked at asparagine 199. The helical transmembrane segment at 214–234 (MAVIMAHFLLGFLGPLAIIGT) threads the bilayer. Over 235-272 (CAHLIRAKLLREGWVHANRPKRLLLVLVSALSAGSHLT) the chain is Cytoplasmic.

The protein belongs to the G-protein coupled receptor 1 family.

The protein resides in the cell membrane. Functionally, orphan receptor. This is Putative G-protein coupled receptor GPR32P1 (GPR32P1) from Homo sapiens (Human).